We begin with the raw amino-acid sequence, 1121 residues long: CRISPR-associated endonuclease Cas9 1 (1121 aa).

The active-site For RuvC-like nuclease domain is Asp9. Mg(2+)-binding residues include Asp9, Glu509, and Glu513. Positions 516–684 (EDDEKKAIQK…VRKKFIERNL (169 aa)) constitute an HNH Cas9-type domain. The active-site Proton acceptor for HNH nuclease domain is the His599. His738 contributes to the Mg(2+) binding site.

The protein belongs to the CRISPR-associated protein Cas9 family. Subtype II-A subfamily. Monomer. Binds crRNA and tracrRNA. It depends on Mg(2+) as a cofactor.

CRISPR (clustered regularly interspaced short palindromic repeat) is an adaptive immune system that provides protection against mobile genetic elements (viruses, transposable elements and conjugative plasmids). CRISPR clusters contain spacers, sequences complementary to antecedent mobile elements, and target invading nucleic acids. CRISPR clusters are transcribed and processed into CRISPR RNA (crRNA). In type II CRISPR systems correct processing of pre-crRNA requires a trans-encoded small RNA (tracrRNA), endogenous ribonuclease 3 (rnc) and this protein. The tracrRNA serves as a guide for ribonuclease 3-aided processing of pre-crRNA. Subsequently Cas9/crRNA/tracrRNA endonucleolytically cleaves linear or circular dsDNA target complementary to the spacer; Cas9 is inactive in the absence of the 2 guide RNAs (gRNA). Cas9 recognizes the protospacer adjacent motif (PAM) in the CRISPR repeat sequences to help distinguish self versus nonself, as targets within the bacterial CRISPR locus do not have PAMs. PAM recognition is also required for catalytic activity. Cuts target DNA when Cas9 and gRNAs are mixed. The polypeptide is CRISPR-associated endonuclease Cas9 1 (Streptococcus thermophilus (strain ATCC BAA-491 / LMD-9)).